The sequence spans 258 residues: Triosephosphate isomerase (258 aa).

Position 9 to 11 (9 to 11 (NWK)) interacts with substrate. The Electrophile role is filled by H105. E176 serves as the catalytic Proton acceptor. Substrate is bound by residues G182 and S214.

Belongs to the triosephosphate isomerase family. In terms of assembly, homodimer.

The protein resides in the cytoplasm. It catalyses the reaction D-glyceraldehyde 3-phosphate = dihydroxyacetone phosphate. The protein operates within carbohydrate biosynthesis; gluconeogenesis. It participates in carbohydrate degradation; glycolysis; D-glyceraldehyde 3-phosphate from glycerone phosphate: step 1/1. Functionally, involved in the gluconeogenesis. Catalyzes stereospecifically the conversion of dihydroxyacetone phosphate (DHAP) to D-glyceraldehyde-3-phosphate (G3P). The protein is Triosephosphate isomerase of Mycoplasmopsis agalactiae (strain NCTC 10123 / CIP 59.7 / PG2) (Mycoplasma agalactiae).